A 566-amino-acid polypeptide reads, in one-letter code: Protein RocB (566 aa).

Involved in arginine degradative pathway. The sequence is that of Protein RocB (rocB) from Bacillus subtilis (strain 168).